The following is a 358-amino-acid chain: Homer protein homolog 3 (358 aa).

Positions 1 to 80 (MSTAREQPIF…TKTSQKFGQW (80 aa)) are required for interaction with NFATC2. Residues 1–113 (MSTAREQPIF…EKFQEVKEAA (113 aa)) form the WH1 domain. Positions 95–122 (SEQQLTQFAEKFQEVKEAARLAREKSQD) form a coiled coil. Serine 120 and serine 158 each carry phosphoserine. Disordered stretches follow at residues 137–168 (QVPP…TERE) and 239–296 (AEPV…QVQD). Residues 190 to 355 (ALQDSNQRLA…LREGLARLAE (166 aa)) are a coiled coil. The segment covering 257 to 267 (LEARVQTKDQE) has biased composition (basic and acidic residues). Positions 268–277 (IQTLKNQSTG) are enriched in polar residues. Over residues 280 to 290 (EAPDTAEREET) the composition is skewed to basic and acidic residues.

It belongs to the Homer family. In terms of assembly, tetramer. Encodes coiled-coil structures that mediate homo- and heteromultimerization. Interacts with NFATC2; interaction is calcium independent; interaction competes with PPP3CA for NFATC2 binding; interaction is reduced by AKT activation. Interacts with NFATC1 and NFATC4. Interacts with SHANK1; forms a high-order complex at least composed of SHANK1 and HOMER3; the complex formation is regulated by CAMK2A-mediated phosphorylation.

It localises to the cytoplasm. The protein resides in the postsynaptic density. Its subcellular location is the synapse. Functionally, postsynaptic density scaffolding protein. Binds and cross-links cytoplasmic regions of GRM1, GRM5, ITPR1, DNM3, RYR1, RYR2, SHANK1 and SHANK3. By physically linking GRM1 and GRM5 with ER-associated ITPR1 receptors, it aids the coupling of surface receptors to intracellular calcium release. Negatively regulates T cell activation by inhibiting the calcineurin-NFAT pathway. Acts by competing with calcineurin/PPP3CA for NFAT protein binding, hence preventing NFAT activation by PPP3CA. The protein is Homer protein homolog 3 of Rattus norvegicus (Rat).